The primary structure comprises 1028 residues: MEPGKETAATSEQKPRPTLRASNTNRQPKVKRRKKDLEELKKEVVMDDHKLTLDELSAKYSVDLTKGLSVTDAQEILTLNGPNVLTPPPTTPEWIKFCKQLFGGFSLLLWTGSLLCFLAYGIHVSYYQENANKDNLYLGIVLSAVVIITGCFSYYQEAKSSKIMESFKTMVPQQALVIRDGEKMQINVRDVVLGDLVEVKGGDQVPADIRVIAAQGCKVDNSSLTGESEPQSRCPDCTHENPLETRNIIFFSTNCVEGTARGVVIATGDHTVMGRIASLTSGLTMGKTPIATEIEHFIHIITAVAVFLGVTFFFLSLILGYTWLDAVIFLIGIIVANVPEGLLATVTVCLTLTAKRMARKNCLVKNLEAVETLGSTSTICSDKTGTLTQNRMTVAHLWFDKTVYEADTSEEQTTGKTFPKSSDTWFYLARIAGLCNRADFKPHQESLPITKRTTTGDASESALLKFIEQSYSPVSEMRQKNPKVAEIPFNSTNKYQMSIHLLEDNSEAHVLLMKGAPERILDFCSSFLLNGQEYPMDEEMKTDFQNAYIELGGLGERVLGFCFLNLPSNFSKGFQFNTEELNFPMENLCFAGLISMIDPPRTAVPDAVSKCRSAGIKVIMVTGDHPITAKAIAKSVGIISEANETAEDIAARLNISISQVSNKSIKAIVVHGSELKDMDSGQLDNILKSYKEIVFARTSPQQKLIIVEGCQRLGAIVAVTGDGVNDSPALKKADIGIAMGITGSDVSKQAADMILLDDNFASIVTGVEEGRLIFDNLKKSIAYTLTSNIPEITPFLLFIVLSIPLPLGTITILCIDLGTDMVPAISLAYETPESDIMKRLPRNPKTDNLVNDRLIGMAYGQIGMIQALAGFFTYFVILAENGFKPLDLLGIRLYWDDTNLNDLEDTYGQQWTYEQRKVVEFTCQTAFFISIVIVQWADLIICKTRRNSLFKQGMKNKVLIFGLLEETILAACLSYIPGMDVALRMYPLKINWWFCALPYSVLIFIYDEVRKLIIRRRPGGWLEKETYY.

The disordered stretch occupies residues 1–36; it reads MEPGKETAATSEQKPRPTLRASNTNRQPKVKRRKKD. Topologically, residues 1–92 are cytoplasmic; it reads MEPGKETAAT…NVLTPPPTTP (92 aa). The tract at residues 87–89 is interaction with phosphoinositide-3 kinase; that stretch reads PPP. A helical transmembrane segment spans residues 93 to 113; the sequence is EWIKFCKQLFGGFSLLLWTGS. Over 114–137 the chain is Extracellular; it reads LLCFLAYGIHVSYYQENANKDNLY. Residues 138 to 158 traverse the membrane as a helical segment; that stretch reads LGIVLSAVVIITGCFSYYQEA. Residues 159–294 lie on the Cytoplasmic side of the membrane; it reads KSSKIMESFK…MGKTPIATEI (136 aa). Residues 295 to 314 form a helical membrane-spanning segment; the sequence is EHFIHIITAVAVFLGVTFFF. Residues 315–326 are Extracellular-facing; the sequence is LSLILGYTWLDA. Residues 327 to 344 form a helical membrane-spanning segment; it reads VIFLIGIIVANVPEGLLA. Topologically, residues 345–777 are cytoplasmic; sequence TVTVCLTLTA…EEGRLIFDNL (433 aa). The active-site 4-aspartylphosphate intermediate is the D382. Residues D722 and D726 each contribute to the Mg(2+) site. A helical membrane pass occupies residues 778 to 797; the sequence is KKSIAYTLTSNIPEITPFLL. At 798 to 807 the chain is on the extracellular side; sequence FIVLSIPLPL. The chain crosses the membrane as a helical span at residues 808-828; it reads GTITILCIDLGTDMVPAISLA. Topologically, residues 829–848 are cytoplasmic; the sequence is YETPESDIMKRLPRNPKTDN. The chain crosses the membrane as a helical span at residues 849–871; it reads LVNDRLIGMAYGQIGMIQALAGF. The Extracellular portion of the chain corresponds to 872-923; it reads FTYFVILAENGFKPLDLLGIRLYWDDTNLNDLEDTYGQQWTYEQRKVVEFTC. Residues 924–943 traverse the membrane as a helical segment; that stretch reads QTAFFISIVIVQWADLIICK. Residues 944 to 956 are Cytoplasmic-facing; the sequence is TRRNSLFKQGMKN. The residue at position 948 (S948) is a Phosphoserine; by PKA. A helical transmembrane segment spans residues 957–975; the sequence is KVLIFGLLEETILAACLSY. The Extracellular segment spans residues 976-990; that stretch reads IPGMDVALRMYPLKI. A helical transmembrane segment spans residues 991–1011; the sequence is NWWFCALPYSVLIFIYDEVRK. The Cytoplasmic portion of the chain corresponds to 1012–1028; it reads LIIRRRPGGWLEKETYY.

It belongs to the cation transport ATPase (P-type) (TC 3.A.3) family. Type IIC subfamily. As to quaternary structure, the sodium/potassium-transporting ATPase is composed of a catalytic alpha subunit, an auxiliary non-catalytic beta subunit and an additional regulatory subunit.

It is found in the cell membrane. It catalyses the reaction K(+)(out) + Na(+)(in) + ATP + H2O = K(+)(in) + Na(+)(out) + ADP + phosphate + H(+). Its activity is regulated as follows. Specifically inhibited by an endogenous cardiac glycoside, ouabain. This is the catalytic component of the active enzyme, which catalyzes the hydrolysis of ATP coupled with the exchange of sodium and potassium ions across the plasma membrane. This action creates the electrochemical gradient of sodium and potassium ions, providing the energy for active transport of various nutrients. Plays a role in sperm motility. This Rattus norvegicus (Rat) protein is Sodium/potassium-transporting ATPase subunit alpha-4 (Atp1a4).